The chain runs to 508 residues: Hydroxymethylglutaryl-CoA synthase, mitochondrial (508 aa).

The N-terminal 37 residues, 1-37, are a transit peptide targeting the mitochondrion; sequence MQRLLTPVKRILQLTRAVQETSLTPARLLPVAHQRFS. Lysine 52 carries the N6-succinyllysine modification. The (3S)-3-hydroxy-3-methylglutaryl-CoA site is built by glutamate 80 and alanine 81. Lysine 83 is modified (N6-acetyllysine; alternate). The residue at position 83 (lysine 83) is an N6-succinyllysine; alternate. Catalysis depends on glutamate 132, which acts as the Proton donor/acceptor. The (3S)-3-hydroxy-3-methylglutaryl-CoA site is built by cysteine 166, asparagine 204, and threonine 208. Cysteine 166 serves as the catalytic Acyl-thioester intermediate. Lysine 221 carries the N6-succinyllysine modification. Residue lysine 243 is modified to N6-acetyllysine. An N6-acetyllysine; alternate modification is found at lysine 256. An N6-succinyllysine; alternate modification is found at lysine 256. Residues serine 258 and histidine 301 each contribute to the (3S)-3-hydroxy-3-methylglutaryl-CoA site. The active-site Proton donor/acceptor is the histidine 301. Lysine 306 is modified (N6-acetyllysine). A (3S)-3-hydroxy-3-methylglutaryl-CoA-binding site is contributed by lysine 310. The residue at position 310 (lysine 310) is an N6-acetyllysine; alternate. N6-succinyllysine; alternate is present on lysine 310. Lysine 333 bears the N6-succinyllysine mark. Lysine 342, lysine 350, lysine 354, and lysine 358 each carry N6-acetyllysine; alternate. N6-succinyllysine; alternate is present on residues lysine 342, lysine 350, lysine 354, and lysine 358. Asparagine 380 and serine 414 together coordinate (3S)-3-hydroxy-3-methylglutaryl-CoA. At serine 433 the chain carries Phosphoserine. Lysine 437 is modified (N6-acetyllysine). Serine 440 carries the post-translational modification Phosphoserine. Lysine 447 is subject to N6-acetyllysine; alternate. Lysine 447 bears the N6-succinyllysine; alternate mark. Serine 456 bears the Phosphoserine mark. Lysine 473 bears the N6-acetyllysine; alternate mark. Lysine 473 is modified (N6-succinyllysine; alternate). Serine 477 is subject to Phosphoserine.

The protein belongs to the thiolase-like superfamily. HMG-CoA synthase family. In terms of assembly, homodimer. Succinylated. Desuccinylated by SIRT5. Succinylation, at least at Lys-83 and Lys-310, inhibits the enzymatic activity. Expression in liver is 200-fold higher than in any other tissue. Low expression in colon, kidney, testis, and pancreas. Very low expression in heart and skeletal muscle. Not detected in brain. As to expression, highest expression detected in heart and skeletal muscle.

It is found in the mitochondrion. It catalyses the reaction acetoacetyl-CoA + acetyl-CoA + H2O = (3S)-3-hydroxy-3-methylglutaryl-CoA + CoA + H(+). The protein operates within metabolic intermediate biosynthesis; (R)-mevalonate biosynthesis; (R)-mevalonate from acetyl-CoA: step 2/3. Catalyzes the first irreversible step in ketogenesis, condensing acetyl-CoA to acetoacetyl-CoA to form HMG-CoA, which is converted by HMG-CoA reductase (HMGCR) into mevalonate. In Homo sapiens (Human), this protein is Hydroxymethylglutaryl-CoA synthase, mitochondrial (HMGCS2).